Here is a 442-residue protein sequence, read N- to C-terminus: tRNA modification GTPase MnmE (442 aa).

Arginine 21, glutamate 79, and lysine 118 together coordinate (6S)-5-formyl-5,6,7,8-tetrahydrofolate. The TrmE-type G domain maps to 214-367; that stretch reads GFKIAIIGKP…LKEELQNYLN (154 aa). Position 224 (asparagine 224) interacts with K(+). Residues 224 to 229, 243 to 249, and 268 to 271 each bind GTP; these read NVGKSS, SDIAGTT, and DTAG. Serine 228 contacts Mg(2+). 3 residues coordinate K(+): serine 243, isoleucine 245, and threonine 248. Residue threonine 249 coordinates Mg(2+). Lysine 442 serves as a coordination point for (6S)-5-formyl-5,6,7,8-tetrahydrofolate.

Belongs to the TRAFAC class TrmE-Era-EngA-EngB-Septin-like GTPase superfamily. TrmE GTPase family. As to quaternary structure, homodimer. Heterotetramer of two MnmE and two MnmG subunits. Requires K(+) as cofactor.

It is found in the cytoplasm. In terms of biological role, exhibits a very high intrinsic GTPase hydrolysis rate. Involved in the addition of a carboxymethylaminomethyl (cmnm) group at the wobble position (U34) of certain tRNAs, forming tRNA-cmnm(5)s(2)U34. This chain is tRNA modification GTPase MnmE, found in Campylobacter jejuni subsp. doylei (strain ATCC BAA-1458 / RM4099 / 269.97).